A 190-amino-acid chain; its full sequence is dCTP deaminase (190 aa).

DCTP is bound at residue Lys107–Arg112. Catalysis depends on Glu133, which acts as the Proton donor/acceptor. The dCTP site is built by Gln152, Tyr166, and Gln176.

Belongs to the dCTP deaminase family. In terms of assembly, homotrimer.

It catalyses the reaction dCTP + H2O + H(+) = dUTP + NH4(+). The protein operates within pyrimidine metabolism; dUMP biosynthesis; dUMP from dCTP (dUTP route): step 1/2. Its function is as follows. Catalyzes the deamination of dCTP to dUTP. The sequence is that of dCTP deaminase from Campylobacter hominis (strain ATCC BAA-381 / DSM 21671 / CCUG 45161 / LMG 19568 / NCTC 13146 / CH001A).